The primary structure comprises 391 residues: RAB6A-GEF complex partner protein 2 (391 aa).

The protein belongs to the RGP1 family. In terms of assembly, forms a complex with RIC1; the interaction enhances RAB6A GTPase activity. Interacts with RIC1. Interacts with RAB6A; the interaction is direct with a preference for RAB6A-GDP. Interacts with RAB33B.

Its subcellular location is the cytoplasm. It is found in the cytosol. The protein resides in the membrane. The RIC1-RGP1 complex acts as a guanine nucleotide exchange factor (GEF), which activates RAB6A by exchanging bound GDP for free GTP and may thereby required for efficient fusion of endosome-derived vesicles with the Golgi compartment. The RIC1-RGP1 complex participates in the recycling of mannose-6-phosphate receptors. The sequence is that of RAB6A-GEF complex partner protein 2 from Homo sapiens (Human).